A 237-amino-acid chain; its full sequence is tRNA (guanine-N(1)-)-methyltransferase (237 aa).

S-adenosyl-L-methionine contacts are provided by residues Gly113 and 133–138; that span reads VGDFIV.

The protein belongs to the RNA methyltransferase TrmD family. As to quaternary structure, homodimer.

It is found in the cytoplasm. The catalysed reaction is guanosine(37) in tRNA + S-adenosyl-L-methionine = N(1)-methylguanosine(37) in tRNA + S-adenosyl-L-homocysteine + H(+). Functionally, specifically methylates guanosine-37 in various tRNAs. The polypeptide is tRNA (guanine-N(1)-)-methyltransferase (Hydrogenovibrio crunogenus (strain DSM 25203 / XCL-2) (Thiomicrospira crunogena)).